A 59-amino-acid polypeptide reads, in one-letter code: Large ribosomal subunit protein bL35 (59 aa).

Disordered regions lie at residues 1 to 22 and 30 to 49; these read MKVK…IKRK and APHK…TVSA. The span at 30–43 shows a compositional bias: basic residues; the sequence is APHKTTKQKRHLRK.

Belongs to the bacterial ribosomal protein bL35 family.

The chain is Large ribosomal subunit protein bL35 (rpmI) from Mycoplasma pneumoniae (strain ATCC 29342 / M129 / Subtype 1) (Mycoplasmoides pneumoniae).